Consider the following 37-residue polypeptide: MKVRSGVKKICKKCTIIKRKGVNRVICEIPKHKQRQG.

This sequence belongs to the bacterial ribosomal protein bL36 family.

This Mycoplasmopsis synoviae (strain 53) (Mycoplasma synoviae) protein is Large ribosomal subunit protein bL36.